We begin with the raw amino-acid sequence, 630 residues long: Mitochondrial Rho GTPase 1 (630 aa).

The region spanning 1–168 is the Miro 1 domain; that stretch reads MKEVRVVICG…FYMCRACVIY (168 aa). The Cytoplasmic portion of the chain corresponds to 1–598; sequence MKEVRVVICG…EEDSNKTNYQ (598 aa). GTP contacts are provided by residues 10-17, 57-61, and 113-116; these read GDQGVGKS, DTQSD, and NKSE. 2 consecutive EF-hand domains span residues 184 to 219 and 304 to 339; these read ATIHALSRIFFLIDKNNDDLLSVDELNSLSEKCFSK and KGYRFLVDLFYQFDRDNDGALNNEELSALFRHTPGL. 8 residues coordinate Ca(2+): Asp197, Asn199, Asp201, Glu208, Asp317, Asp319, Asp321, and Glu328. The 161-residue stretch at 419–579 folds into the Miro 2 domain; the sequence is RNVFLCFVVG…FIQLAESAQY (161 aa). GTP contacts are provided by residues 428–435, 459–463, and 527–530; these read GSKSCGKT, EFQST, and TKAD. The helical; Anchor for type IV membrane protein transmembrane segment at 599-619 threads the bilayer; that stretch reads LVAALTAFGALLLSVGGSLTW. The Mitochondrial intermembrane portion of the chain corresponds to 620–630; sequence KIIKHQYYSKK.

It belongs to the mitochondrial Rho GTPase family.

The protein resides in the mitochondrion outer membrane. Its function is as follows. Mitochondrial GTPase involved in mitochondrial trafficking. Probably involved in control of anterograde transport of mitochondria and their subcellular distribution. In Schizosaccharomyces pombe (strain 972 / ATCC 24843) (Fission yeast), this protein is Mitochondrial Rho GTPase 1 (gem1).